The following is a 286-amino-acid chain: Bifunctional protein FolD (286 aa).

166 to 168 (GAS) is a binding site for NADP(+).

This sequence belongs to the tetrahydrofolate dehydrogenase/cyclohydrolase family. Homodimer.

It carries out the reaction (6R)-5,10-methylene-5,6,7,8-tetrahydrofolate + NADP(+) = (6R)-5,10-methenyltetrahydrofolate + NADPH. The enzyme catalyses (6R)-5,10-methenyltetrahydrofolate + H2O = (6R)-10-formyltetrahydrofolate + H(+). Its pathway is one-carbon metabolism; tetrahydrofolate interconversion. Catalyzes the oxidation of 5,10-methylenetetrahydrofolate to 5,10-methenyltetrahydrofolate and then the hydrolysis of 5,10-methenyltetrahydrofolate to 10-formyltetrahydrofolate. This is Bifunctional protein FolD from Idiomarina loihiensis (strain ATCC BAA-735 / DSM 15497 / L2-TR).